The chain runs to 251 residues: 3-deoxy-manno-octulosonate cytidylyltransferase (251 aa).

Belongs to the KdsB family.

It is found in the cytoplasm. It carries out the reaction 3-deoxy-alpha-D-manno-oct-2-ulosonate + CTP = CMP-3-deoxy-beta-D-manno-octulosonate + diphosphate. Its pathway is nucleotide-sugar biosynthesis; CMP-3-deoxy-D-manno-octulosonate biosynthesis; CMP-3-deoxy-D-manno-octulosonate from 3-deoxy-D-manno-octulosonate and CTP: step 1/1. It participates in bacterial outer membrane biogenesis; lipopolysaccharide biosynthesis. Functionally, activates KDO (a required 8-carbon sugar) for incorporation into bacterial lipopolysaccharide in Gram-negative bacteria. The chain is 3-deoxy-manno-octulosonate cytidylyltransferase from Geotalea uraniireducens (strain Rf4) (Geobacter uraniireducens).